We begin with the raw amino-acid sequence, 237 residues long: Concanavalin-A (237 aa).

Residues Glu8 and Asp10 each coordinate Mn(2+). Ca(2+) is bound by residues Asp10, Tyr12, Asn14, and Asp19. Asn14 provides a ligand contact to a carbohydrate. Asp19 and His24 together coordinate Mn(2+). A carbohydrate contacts are provided by residues 98–100 (GLY), Asp208, and Arg228.

Belongs to the leguminous lectin family. Homotetramer. In terms of processing, concanavalin A-like lectins of the Diocleinae subtribe undergo proteolytic processing referred to as circular permutation. The propeptide is split into an N-terminal and a C-terminal part, the gamma and beta chain, respectively. These are then religated in beta-gamma order to form the mature alpha chain. The beta and gamma chains can often be detected in cell extracts. Residues 1-118 of the mature chain, as displayed here, probably constitute the beta chain in the propeptide, residues 119-237 the gamma chain.

Its function is as follows. Glucose/D-mannose specific lectin. The sequence is that of Concanavalin-A from Canavalia cathartica (Jackbean).